The sequence spans 201 residues: Probable GTP-binding protein EngB (201 aa).

The EngB-type G domain occupies 22–195; it reads TQPEFAFAGK…WRCIEQFLEV (174 aa). GTP-binding positions include 30 to 37, 57 to 61, 75 to 78, 142 to 145, and 174 to 176; these read GKSNVGKS, GKTQT, DLPG, TKLD, and FSS. 2 residues coordinate Mg(2+): S37 and T59.

The protein belongs to the TRAFAC class TrmE-Era-EngA-EngB-Septin-like GTPase superfamily. EngB GTPase family. The cofactor is Mg(2+).

Necessary for normal cell division and for the maintenance of normal septation. The polypeptide is Probable GTP-binding protein EngB (Lachnoclostridium phytofermentans (strain ATCC 700394 / DSM 18823 / ISDg) (Clostridium phytofermentans)).